Here is a 77-residue protein sequence, read N- to C-terminus: NEDD8-like protein RUB1 (77 aa).

Residues 1–74 (MIVKVKTLTG…MQLHLVLTLR (74 aa)) form the Ubiquitin-like domain. A Glycyl lysine isopeptide (Gly-Lys) (interchain with K-? in acceptor proteins) cross-link involves residue glycine 76. A propeptide is located at residue asparagine 77.

Interacts with CDC53 and DCN1.

Functionally, ubiquitin-like protein modifier that can be covalently attached to lysine residues of target proteins. Activated by the dimeric UBA3-ULA1 E1 enzyme and conjugated by the E2 UBC12 to substrate proteins. RUB1-conjugated (neddylated) substrate proteins include the cullins CDC53, RTT101 and CUL3, and the modification enhances the ubiquitin-ligase activity of the corresponding cullin-RING-based E3 ubiquitin-protein ligase complexes (CRLs). This Saccharomyces cerevisiae (strain ATCC 204508 / S288c) (Baker's yeast) protein is NEDD8-like protein RUB1 (RUB1).